Reading from the N-terminus, the 465-residue chain is tRNA (guanine(37)-N(1))-methyltransferase (465 aa).

Residues histidine 189, 227–228 (DL), and 255–256 (DA) each bind S-adenosyl-L-methionine. A disordered region spans residues 283–362 (YPKEGVPANE…GPGPPPSKPW (80 aa)). Positions 291–320 (NENSSSNGNHNDVREGSQNGANESSVASTT) are enriched in polar residues. A compositionally biased stretch (basic residues) spans 343-352 (TKRRNNKRVR). Asparagine 371 is an S-adenosyl-L-methionine binding site.

The protein belongs to the class I-like SAM-binding methyltransferase superfamily. TRM5/TYW2 family. As to quaternary structure, monomer.

The protein localises to the mitochondrion matrix. It is found in the nucleus. It localises to the cytoplasm. It carries out the reaction guanosine(37) in tRNA + S-adenosyl-L-methionine = N(1)-methylguanosine(37) in tRNA + S-adenosyl-L-homocysteine + H(+). Functionally, specifically methylates the N1 position of guanosine-37 in various cytoplasmic and mitochondrial tRNAs. Methylation is not dependent on the nature of the nucleoside 5' of the target nucleoside. This is the first step in the biosynthesis of wybutosine (yW), a modified base adjacent to the anticodon of tRNAs and required for accurate decoding. This is tRNA (guanine(37)-N(1))-methyltransferase from Sorghum bicolor (Sorghum).